The following is a 216-amino-acid chain: Nucleoside triphosphate pyrophosphatase (216 aa).

D82 serves as the catalytic Proton acceptor.

The protein belongs to the Maf family. It depends on a divalent metal cation as a cofactor.

Its subcellular location is the cytoplasm. It catalyses the reaction a ribonucleoside 5'-triphosphate + H2O = a ribonucleoside 5'-phosphate + diphosphate + H(+). It carries out the reaction a 2'-deoxyribonucleoside 5'-triphosphate + H2O = a 2'-deoxyribonucleoside 5'-phosphate + diphosphate + H(+). In terms of biological role, nucleoside triphosphate pyrophosphatase. May have a dual role in cell division arrest and in preventing the incorporation of modified nucleotides into cellular nucleic acids. The protein is Nucleoside triphosphate pyrophosphatase of Mycobacterium ulcerans (strain Agy99).